The chain runs to 271 residues: Calretinin (271 aa).

EF-hand domains lie at 16–51 (LTATQFLEIWKHFDADGNGYIEGKELENFFQELEKA), 63–98 (NLGEKMKEFMQKYDKNSDGKIEMAELAQILPTEENF), 107–142 (GSSTEFMEAWRKYDTDRSGYIEANELKGFLSDLLKK), 151–186 (KLQEYTQTILRMFDLNGDGKLGLSEMSRLLPVQENF), 195–230 (LTSEEFNAIFTFYDKDGSGYIDENELDALLKDLYEK), and 235–270 (MNIQQLTSYRKSVMSLAEAEKLYRKDLEIVLCSEPP). Ca(2+) is bound by residues Asp29, Asp31, Asn33, Tyr35, Glu40, Asp76, Asn78, Asp80, Lys82, Glu87, Asp120, Asp122, Ser124, Tyr126, Glu131, Asp164, Asn166, Asp168, Lys170, Glu175, Asp208, Asp210, Ser212, Tyr214, and Glu219. Residue Tyr214 is modified to Phosphotyrosine.

This sequence belongs to the calbindin family.

The protein localises to the synapse. The protein resides in the cell projection. It is found in the dendrite. Its function is as follows. Calcium-binding protein involved in calcium homeostasis and signal transduction. It plays a critical role in buffering intracellular calcium levels and modulating calcium-dependent signaling pathways. Predominantly expressed in specific neuronal populations, influences synaptic plasticity and neuronal excitability, contributing to learning and memory. During embryonic development, it facilitates neuronal differentiation and maturation. In Bos taurus (Bovine), this protein is Calretinin (CALB2).